The primary structure comprises 177 residues: Large ribosomal subunit protein uL6 (177 aa).

This sequence belongs to the universal ribosomal protein uL6 family. In terms of assembly, part of the 50S ribosomal subunit.

Its function is as follows. This protein binds to the 23S rRNA, and is important in its secondary structure. It is located near the subunit interface in the base of the L7/L12 stalk, and near the tRNA binding site of the peptidyltransferase center. This is Large ribosomal subunit protein uL6 from Bordetella bronchiseptica (strain ATCC BAA-588 / NCTC 13252 / RB50) (Alcaligenes bronchisepticus).